The chain runs to 472 residues: Sarcalumenin (472 aa).

Residues 1-19 (MRALLLFCFVASLLLSGQA) form the signal peptide. The Dynamin-type G domain occupies 89 to 330 (ITSKPMVLFL…IENRLENKIA (242 aa)). Positions 99–106 (GPWSVGKS) are G1 motif. N-linked (GlcNAc...) asparagine glycosylation is present at serine 102. The tract at residues 127–128 (EP) is G2 motif. The interval 189 to 192 (DTPG) is G3 motif. The interval 254–257 (NKAD) is G4 motif. Residue proline 277 is a region of interest, G5 motif. 2 N-linked (GlcNAc...) asparagine glycosylation sites follow: asparagine 280 and asparagine 388.

This sequence belongs to the TRAFAC class dynamin-like GTPase superfamily. Dynamin/Fzo/YdjA family. In terms of processing, N-glycosylated. In terms of tissue distribution, detected in skeletal muscle.

It is found in the sarcoplasmic reticulum lumen. It localises to the sarcoplasmic reticulum membrane. The chain is Sarcalumenin (SRL) from Oryctolagus cuniculus (Rabbit).